We begin with the raw amino-acid sequence, 2410 residues long: Coprinoferrin synthetase (2410 aa).

An adenylation 1 region spans residues 237-646; sequence LERRAKTNPH…GRIDTQIKVR (410 aa). Positions 783-860 constitute a Carrier 1 domain; it reads RDCTPLEAEV…DIAQLVHVST (78 aa). Serine 820 bears the O-(pantetheine 4'-phosphoryl)serine mark. Positions 891 to 1260 are condensation 1; sequence DILPPFPVQE…SVEAVVNVHD (370 aa). Residues 1298–1317 are disordered; sequence ELPLPSRRSPEPVRKVNDDE. Residues 1305 to 1314 show a composition bias toward basic and acidic residues; the sequence is RSPEPVRKVN. The Carrier 2 domain maps to 1324–1400; the sequence is LLDPVVVADL…RLARVVSNNK (77 aa). O-(pantetheine 4'-phosphoryl)serine is present on serine 1361. The segment at 1436-1839 is condensation 2; that stretch reads IIPSTALQSG…RIGRTFSVPS (404 aa). Residues 1858-1932 enclose the Carrier 3 domain; that stretch reads VQAGIIHPVL…DLVLQATEIK (75 aa). The residue at position 1893 (serine 1893) is an O-(pantetheine 4'-phosphoryl)serine. The segment at 1992–2315 is condensation 3; that stretch reads FQYLFTFKLP…TPIFNVNVNV (324 aa).

It belongs to the NRP synthetase family.

It functions in the pathway siderophore biosynthesis. Functionally, nonribosomal peptide synthase; part of the gene cluster that mediates the biosynthesis of coprinoferrin, an acylated tripeptide hydroxamate siderophore. The biosynthesis of coprinoferrin depends on the hydroxylation of ornithine to N(5)-hydroxyornithine, catalyzed by the monooxygenase cpf2. The second step, the acylation of N(5)-hydroxy-L-ornithine to yield N(5)-hexanoyl-N(5)-hydroxyl-L-ornithine is catalyzed by a not yet identified acyltransferase. Finally, assembly of coprinoferrin is catalyzed by the nonribosomal peptide synthase (NRPS) cpf1 via amide bond formation between three N(5)-hexanoyl-N(5)-hydroxyl-L-ornithine molecules to release the linear trimer. Interestingly, proteins seemingly not directly related to biosynthesis, such as transcription factors, replication factors, and autophagy-related proteins, are conserved among the clusters homologous to the coprinoferrin cluster, suggesting that the cluster may also play developmental and cell biological functions. The chain is Coprinoferrin synthetase from Coprinopsis cinerea (strain Okayama-7 / 130 / ATCC MYA-4618 / FGSC 9003) (Inky cap fungus).